The chain runs to 111 residues: Notch-regulated ankyrin repeat-containing protein B (111 aa).

ANK repeat units lie at residues 47 to 76 (EGQT…DTRL) and 80 to 109 (DGWS…YSSS).

Belongs to the NRARP family.

Its function is as follows. Regulates independently canonical Wnt and Notch signaling by modulating LEF1 and Notch protein turnover. Stabilizes LEF1, a pivotal transcription factor in the Wnt signaling cascade, by blocking its ubiquitination. Involved in angiogenesis; involved in intersegmental vessel patterning during development. The chain is Notch-regulated ankyrin repeat-containing protein B (nrarpb) from Danio rerio (Zebrafish).